We begin with the raw amino-acid sequence, 510 residues long: NAD(P)H-quinone oxidoreductase subunit 2 B, chloroplastic (510 aa).

The next 14 helical transmembrane spans lie at 31–51, 59–79, 99–119, 124–144, 149–169, 184–204, 229–249, 261–281, 295–315, 323–343, 354–374, 395–415, 418–438, and 484–504; these read FIFP…IDLT, WFYF…LFRW, IFQF…VEYI, MAIT…MFLC, LITI…LSGY, LLMG…LYGL, ISIA…LAPF, PTPV…ALAT, WHLL…LLAI, MLAY…IVGD, YMLF…LFGL, ALSL…AGFF, LYLF…IGLL, and MTVC…ILAI.

This sequence belongs to the complex I subunit 2 family. NDH is composed of at least 16 different subunits, 5 of which are encoded in the nucleus.

It is found in the plastid. Its subcellular location is the chloroplast thylakoid membrane. It catalyses the reaction a plastoquinone + NADH + (n+1) H(+)(in) = a plastoquinol + NAD(+) + n H(+)(out). The enzyme catalyses a plastoquinone + NADPH + (n+1) H(+)(in) = a plastoquinol + NADP(+) + n H(+)(out). Functionally, NDH shuttles electrons from NAD(P)H:plastoquinone, via FMN and iron-sulfur (Fe-S) centers, to quinones in the photosynthetic chain and possibly in a chloroplast respiratory chain. The immediate electron acceptor for the enzyme in this species is believed to be plastoquinone. Couples the redox reaction to proton translocation, and thus conserves the redox energy in a proton gradient. This chain is NAD(P)H-quinone oxidoreductase subunit 2 B, chloroplastic, found in Hordeum vulgare (Barley).